A 675-amino-acid chain; its full sequence is Nexilin (675 aa).

The interval 1–66 is disordered; that stretch reads MNDISQKAEI…RKEQYIRERE (66 aa). Lys-16 is modified (phosphoserine). Positions 27-66 are enriched in basic and acidic residues; sequence GKGDVKDKFEAMQRAREERNQRRSRDEKQRRKEQYIRERE. The residue at position 80 (Ser-80) is a Phosphoserine. Residues 105 to 127 form a disordered region; that stretch reads RFAEMEKQRQEEQRKRTEEERKR. Ser-241 carries the phosphoserine modification. Disordered regions lie at residues 254–278 and 313–336; these read LERQRQENRKKQAEEEARKRLEEEK and SFEEMERQRREDEKRKAEEEARRR. A phosphoserine mark is found at Ser-357 and Ser-365. Thr-370 carries the post-translational modification Phosphothreonine. 2 disordered regions span residues 487–513 and 551–584; these read ENFHEEDDVDVRPARKSEAPFTHKVNM and LQKKREEEEEEEGSIMNGSTAEDEEQTRSGAPWF. Phosphoserine is present on residues Ser-564 and Ser-569. In terms of domain architecture, Ig-like spans 582–670; it reads PWFKKPLKNT…GSAASTCILT (89 aa).

Interacts with F-actin. Abundantly expressed in heart and skeletal muscle, and at lower levels in placenta, lung, liver and pancreas. Also expressed in HeLaS3 and MOLT-4 cell lines.

The protein localises to the cytoplasm. The protein resides in the cytoskeleton. It localises to the cell junction. Its subcellular location is the adherens junction. It is found in the myofibril. The protein localises to the sarcomere. The protein resides in the z line. Functionally, involved in regulating cell migration through association with the actin cytoskeleton. Has an essential role in the maintenance of Z line and sarcomere integrity. The protein is Nexilin of Homo sapiens (Human).